Consider the following 440-residue polypeptide: Ribulose bisphosphate carboxylase large chain (440 aa).

Lys4 is subject to N6,N6,N6-trimethyllysine. Asn113 and Thr163 together coordinate substrate. Lys165 (proton acceptor) is an active-site residue. Lys167 contributes to the substrate binding site. 3 residues coordinate Mg(2+): Lys191, Asp193, and Glu194. At Lys191 the chain carries N6-carboxylysine. Residue His284 is the Proton acceptor of the active site. The substrate site is built by Arg285, His317, and Ser369.

This sequence belongs to the RuBisCO large chain family. Type I subfamily. Heterohexadecamer of 8 large chains and 8 small chains; disulfide-linked. The disulfide link is formed within the large subunit homodimers. Requires Mg(2+) as cofactor. In terms of processing, the disulfide bond which can form in the large chain dimeric partners within the hexadecamer appears to be associated with oxidative stress and protein turnover.

The protein localises to the plastid. It localises to the chloroplast. It catalyses the reaction 2 (2R)-3-phosphoglycerate + 2 H(+) = D-ribulose 1,5-bisphosphate + CO2 + H2O. The catalysed reaction is D-ribulose 1,5-bisphosphate + O2 = 2-phosphoglycolate + (2R)-3-phosphoglycerate + 2 H(+). In terms of biological role, ruBisCO catalyzes two reactions: the carboxylation of D-ribulose 1,5-bisphosphate, the primary event in carbon dioxide fixation, as well as the oxidative fragmentation of the pentose substrate in the photorespiration process. Both reactions occur simultaneously and in competition at the same active site. The sequence is that of Ribulose bisphosphate carboxylase large chain from Polystichum munitum (Western sword-fern).